The chain runs to 631 residues: Methanol dehydrogenase [cytochrome c] subunit 1 (631 aa).

Positions 1–32 are cleaved as a signal peptide; it reads MNRNTPKARGASSLAMAVAMGLAVLTTAPATA. An intrachain disulfide couples C135 to C136. 2 residues coordinate Ca(2+): E209 and N293. The active-site Proton acceptor is D335. A disulfide bridge connects residues C418 and C447.

Belongs to the bacterial PQQ dehydrogenase family. In terms of assembly, heterotetramer composed of 2 alpha and 2 beta subunits. Pyrroloquinoline quinone serves as cofactor. Requires Ca(2+) as cofactor.

Its subcellular location is the periplasm. The catalysed reaction is 2 Fe(III)-[cytochrome cL] + a primary alcohol = 2 Fe(II)-[cytochrome cL] + an aldehyde + 2 H(+). In terms of biological role, catalyzes the oxidation of primary alcohols including methanol. The chain is Methanol dehydrogenase [cytochrome c] subunit 1 (moxF) from Paracoccus denitrificans.